The sequence spans 313 residues: tRNA dimethylallyltransferase (313 aa).

13–20 provides a ligand contact to ATP; the sequence is GPTASGKT. 15-20 is a binding site for substrate; the sequence is TASGKT. Interaction with substrate tRNA regions lie at residues 38–41, 162–166, 243–248, and 276–283; these read DSAL, QRLSR, RCVGYR, and KRQITWLR.

This sequence belongs to the IPP transferase family. Monomer. It depends on Mg(2+) as a cofactor.

The catalysed reaction is adenosine(37) in tRNA + dimethylallyl diphosphate = N(6)-dimethylallyladenosine(37) in tRNA + diphosphate. Its function is as follows. Catalyzes the transfer of a dimethylallyl group onto the adenine at position 37 in tRNAs that read codons beginning with uridine, leading to the formation of N6-(dimethylallyl)adenosine (i(6)A). This is tRNA dimethylallyltransferase from Aliivibrio salmonicida (strain LFI1238) (Vibrio salmonicida (strain LFI1238)).